The sequence spans 226 residues: Probable transaldolase (226 aa).

The Schiff-base intermediate with substrate role is filled by Lys91.

The protein belongs to the transaldolase family. Type 3B subfamily.

It is found in the cytoplasm. It catalyses the reaction D-sedoheptulose 7-phosphate + D-glyceraldehyde 3-phosphate = D-erythrose 4-phosphate + beta-D-fructose 6-phosphate. The protein operates within carbohydrate degradation; pentose phosphate pathway; D-glyceraldehyde 3-phosphate and beta-D-fructose 6-phosphate from D-ribose 5-phosphate and D-xylulose 5-phosphate (non-oxidative stage): step 2/3. Functionally, transaldolase is important for the balance of metabolites in the pentose-phosphate pathway. The sequence is that of Probable transaldolase from Chlorobium phaeobacteroides (strain DSM 266 / SMG 266 / 2430).